A 304-amino-acid chain; its full sequence is Ribonuclease Z (304 aa).

Zn(2+)-binding residues include histidine 63, histidine 65, aspartate 67, histidine 68, histidine 143, aspartate 213, and histidine 271. The active-site Proton acceptor is aspartate 67.

It belongs to the RNase Z family. In terms of assembly, homodimer. It depends on Zn(2+) as a cofactor.

It catalyses the reaction Endonucleolytic cleavage of RNA, removing extra 3' nucleotides from tRNA precursor, generating 3' termini of tRNAs. A 3'-hydroxy group is left at the tRNA terminus and a 5'-phosphoryl group is left at the trailer molecule.. In terms of biological role, zinc phosphodiesterase, which displays some tRNA 3'-processing endonuclease activity. Probably involved in tRNA maturation, by removing a 3'-trailer from precursor tRNA. The protein is Ribonuclease Z of Bacteroides fragilis (strain ATCC 25285 / DSM 2151 / CCUG 4856 / JCM 11019 / LMG 10263 / NCTC 9343 / Onslow / VPI 2553 / EN-2).